We begin with the raw amino-acid sequence, 370 residues long: Cobalt-precorrin-5B C(1)-methyltransferase (370 aa).

It belongs to the CbiD family.

It carries out the reaction Co-precorrin-5B + S-adenosyl-L-methionine = Co-precorrin-6A + S-adenosyl-L-homocysteine. Its pathway is cofactor biosynthesis; adenosylcobalamin biosynthesis; cob(II)yrinate a,c-diamide from sirohydrochlorin (anaerobic route): step 6/10. In terms of biological role, catalyzes the methylation of C-1 in cobalt-precorrin-5B to form cobalt-precorrin-6A. The polypeptide is Cobalt-precorrin-5B C(1)-methyltransferase (Pseudomonas savastanoi pv. phaseolicola (strain 1448A / Race 6) (Pseudomonas syringae pv. phaseolicola (strain 1448A / Race 6))).